We begin with the raw amino-acid sequence, 618 residues long: ADP,ATP carrier protein 2, chloroplastic (618 aa).

The N-terminal 76 residues, 1 to 76 (MEGLIQTRGI…KERSRGFICK (76 aa)), are a transit peptide targeting the chloroplast. Ala-77 bears the N-acetylalanine mark. The next 11 helical transmembrane spans lie at 110-130 (LKKI…YTIL), 148-168 (IIPF…MLLY), 179-199 (ALFY…GFVM), 237-257 (LFYV…FWGF), 270-289 (FYPL…GRTV), 312-332 (AMMS…WWVN), 368-388 (LATL…TWKS), 401-421 (SAFM…MMLL), 441-461 (VLLL…PFAP), 464-484 (AKLG…QNIF), and 542-562 (LANS…AWLA). A disordered region spans residues 586–618 (RASSVKIPVVSQEDAPSGETTSQLSEKSTPTGI). Residues 603–618 (GETTSQLSEKSTPTGI) show a composition bias toward polar residues.

It belongs to the ADP/ATP translocase tlc (TC 2.A.12.2) family.

Its subcellular location is the plastid. The protein resides in the chloroplast membrane. This chain is ADP,ATP carrier protein 2, chloroplastic (AATP2), found in Arabidopsis thaliana (Mouse-ear cress).